Consider the following 206-residue polypeptide: Large ribosomal subunit protein uL4 (206 aa).

This sequence belongs to the universal ribosomal protein uL4 family. As to quaternary structure, part of the 50S ribosomal subunit.

One of the primary rRNA binding proteins, this protein initially binds near the 5'-end of the 23S rRNA. It is important during the early stages of 50S assembly. It makes multiple contacts with different domains of the 23S rRNA in the assembled 50S subunit and ribosome. Functionally, forms part of the polypeptide exit tunnel. This chain is Large ribosomal subunit protein uL4, found in Nitrobacter winogradskyi (strain ATCC 25391 / DSM 10237 / CIP 104748 / NCIMB 11846 / Nb-255).